A 334-amino-acid chain; its full sequence is UPF0104 membrane protein MTH_378 (334 aa).

8 helical membrane-spanning segments follow: residues F7–S27, V33–A53, F120–I140, V142–N162, V218–F238, F247–P267, M277–V297, and I300–E320.

It belongs to the UPF0104 family.

It is found in the cell membrane. This Methanothermobacter thermautotrophicus (strain ATCC 29096 / DSM 1053 / JCM 10044 / NBRC 100330 / Delta H) (Methanobacterium thermoautotrophicum) protein is UPF0104 membrane protein MTH_378.